The primary structure comprises 141 residues: ATP synthase epsilon chain (141 aa).

This sequence belongs to the ATPase epsilon chain family. In terms of assembly, F-type ATPases have 2 components, CF(1) - the catalytic core - and CF(0) - the membrane proton channel. CF(1) has five subunits: alpha(3), beta(3), gamma(1), delta(1), epsilon(1). CF(0) has three main subunits: a, b and c.

It localises to the cell inner membrane. In terms of biological role, produces ATP from ADP in the presence of a proton gradient across the membrane. This chain is ATP synthase epsilon chain, found in Burkholderia mallei (strain NCTC 10247).